The sequence spans 1437 residues: IQ domain-containing protein N (1437 aa).

Residues 84-112 (SRAATVIQASWKGYRLRQKLISQMTAAKA) form the IQ 1 domain. Disordered regions lie at residues 332-353 (TSPT…SLSN), 416-440 (SQAQ…KPSP), and 848-878 (STGS…QNPR). Low complexity predominate over residues 422–440 (TVSTSSKTSPSSPTVKPSP). Over residues 861–878 (AQPQLHSHAPNKTMQNPR) the composition is skewed to polar residues. IQ domains lie at 1190–1216 (QAVV…QWAT), 1217–1239 (IIQA…RATT), 1240–1258 (IIQA…ARQV), 1361–1389 (QHRA…SAAK), and 1390–1413 (MVQA…LGTG).

In terms of assembly, interacts with calmodulin. In terms of tissue distribution, expressed in testis, in elongating spermatids (at protein level).

Its function is as follows. Essential for spermiogenesis and fertilization. May be required for manchette assembly in elongating spermatids. The protein is IQ domain-containing protein N (Iqcn) of Mus musculus (Mouse).